A 332-amino-acid polypeptide reads, in one-letter code: Phosphoribosylformylglycinamidine cyclo-ligase (332 aa).

This sequence belongs to the AIR synthase family.

The protein resides in the cytoplasm. The catalysed reaction is 2-formamido-N(1)-(5-O-phospho-beta-D-ribosyl)acetamidine + ATP = 5-amino-1-(5-phospho-beta-D-ribosyl)imidazole + ADP + phosphate + H(+). Its pathway is purine metabolism; IMP biosynthesis via de novo pathway; 5-amino-1-(5-phospho-D-ribosyl)imidazole from N(2)-formyl-N(1)-(5-phospho-D-ribosyl)glycinamide: step 2/2. The protein is Phosphoribosylformylglycinamidine cyclo-ligase of Clostridium acetobutylicum (strain ATCC 824 / DSM 792 / JCM 1419 / IAM 19013 / LMG 5710 / NBRC 13948 / NRRL B-527 / VKM B-1787 / 2291 / W).